A 773-amino-acid chain; its full sequence is MQNYQSHSIKVLKGLEGVRKRPGMYIGDTNVGGLHHMVYEVVDNAVDESMAGFCDTINITLTEEGSCIVEDNGRGIPVDIHPTEKIPACTVVLTILHAGGKFDNDTYKVSGGLHGVGVSVVNALSKRLIMTIKKEGQIYRQEFEKGIPISELEIIGKTKSAKESGTTIEFFPDESVMEVVEFQAGILQKRFKEMAYLNDGLKISFKEEKTQLQETYFYKDGLKQFVKDSAKKELLTPIIAFKSMDEETRTSIEVALAYADDYNENTLSFVNNIKTSEGGTHEAGFKMGLSKAILQYIDNNIKTKESRPISEDIKEGLIAVVSLKMSEPLFEGQTKSKLGSSYARALVSKLVYDKIHQFLEENPNEAKIIANKALLAAKAREASKKARELTRKKDNLSVGTLPGKLADCQSKDPLESEIFLVEGDSAGGSAKQGRDRVFQAILPLKGKILNVEKSHLSKILKSEEIKNMITAFGCGIQESFDIERLRYHKIIIMTDADVDGSHIQTLLMTFFYRYLRPLIEQGHVFIAQAPLYKYKKGKTEIYLKDSVALDHFLIEHGINSVDIEGIGKNDLMNLLKVARHYRYTLLELEKRYNLLEVLRFLIETKDALSLDMKVLEKSILEKLEGLNYQILRSFATEESLHLHAQTPKGLVEFNLDDNLFKDVLFEEAHYTYQKLMEYNLDFLENKDILAFLEEVENYAKKGANIQRYKGLGEMNPNDLWETTMHKENRSLIKLKIEDLEKTDAVFSLCMGDEVEPRRAFIQAHAKDVKQLDV.

In terms of domain architecture, Toprim spans 416 to 530 (SEIFLVEGDS…QGHVFIAQAP (115 aa)). Mg(2+)-binding residues include Glu422, Asp495, and Asp497.

The protein belongs to the type II topoisomerase GyrB family. In terms of assembly, heterotetramer, composed of two GyrA and two GyrB chains. In the heterotetramer, GyrA contains the active site tyrosine that forms a transient covalent intermediate with DNA, while GyrB binds cofactors and catalyzes ATP hydrolysis. Mg(2+) is required as a cofactor. It depends on Mn(2+) as a cofactor. The cofactor is Ca(2+).

It localises to the cytoplasm. It catalyses the reaction ATP-dependent breakage, passage and rejoining of double-stranded DNA.. In terms of biological role, a type II topoisomerase that negatively supercoils closed circular double-stranded (ds) DNA in an ATP-dependent manner to modulate DNA topology and maintain chromosomes in an underwound state. Negative supercoiling favors strand separation, and DNA replication, transcription, recombination and repair, all of which involve strand separation. Also able to catalyze the interconversion of other topological isomers of dsDNA rings, including catenanes and knotted rings. Type II topoisomerases break and join 2 DNA strands simultaneously in an ATP-dependent manner. In Helicobacter pylori (strain J99 / ATCC 700824) (Campylobacter pylori J99), this protein is DNA gyrase subunit B.